A 229-amino-acid chain; its full sequence is Octanoyltransferase (229 aa).

Residues 45–220 (ATAVDELWVV…ELARQFCFVL (176 aa)) enclose the BPL/LPL catalytic domain. Residues 84-91 (RGGQVTYH), 151-153 (ALG), and 164-166 (GVA) each bind substrate. Cys182 acts as the Acyl-thioester intermediate in catalysis.

It belongs to the LipB family.

It localises to the cytoplasm. It carries out the reaction octanoyl-[ACP] + L-lysyl-[protein] = N(6)-octanoyl-L-lysyl-[protein] + holo-[ACP] + H(+). It participates in protein modification; protein lipoylation via endogenous pathway; protein N(6)-(lipoyl)lysine from octanoyl-[acyl-carrier-protein]: step 1/2. Its function is as follows. Catalyzes the transfer of endogenously produced octanoic acid from octanoyl-acyl-carrier-protein onto the lipoyl domains of lipoate-dependent enzymes. Lipoyl-ACP can also act as a substrate although octanoyl-ACP is likely to be the physiological substrate. In Xylella fastidiosa (strain 9a5c), this protein is Octanoyltransferase.